Reading from the N-terminus, the 261-residue chain is tRNA pseudouridine synthase A (261 aa).

Aspartate 51 functions as the Nucleophile in the catalytic mechanism. Position 109 (tyrosine 109) interacts with substrate.

The protein belongs to the tRNA pseudouridine synthase TruA family. Homodimer.

It carries out the reaction uridine(38/39/40) in tRNA = pseudouridine(38/39/40) in tRNA. Functionally, formation of pseudouridine at positions 38, 39 and 40 in the anticodon stem and loop of transfer RNAs. The polypeptide is tRNA pseudouridine synthase A (Shewanella baltica (strain OS185)).